A 244-amino-acid polypeptide reads, in one-letter code: MICAFLRVVQHAEKLHGSLGRQLLPHFVFTKACFKTQPLRWGLREQKITVQPRTVLRFTQKTFWTQGPDPRKAKEDSTKQVSIRRNQREETGVSMSQKVREAGRDVSYLIVVLFGVGLTGGLLYAIFKELFFSSSPNIIYGKALGKCRTHPEVIGVFGEPLKGYGEMSRRGRRQHVRFSEYVNNGLKRIRVKFYIEGSEPGKQGTVHAEVEENPGSGQFEFRYIFVEVTPTRSIIVEDNRSEQS.

Residues 1–18 (MICAFLRVVQHAEKLHGS) constitute a mitochondrion transit peptide. The interval 65 to 96 (TQGPDPRKAKEDSTKQVSIRRNQREETGVSMS) is disordered. Residues 69 to 78 (DPRKAKEDST) show a composition bias toward basic and acidic residues. A helical transmembrane segment spans residues 107–127 (SYLIVVLFGVGLTGGLLYAIF).

It belongs to the TIM21 family. As to quaternary structure, component of the TIM23 complex. Component of the MITRAC (mitochondrial translation regulation assembly intermediate of cytochrome c oxidase complex) complex, the core components of this complex being COA3/MITRAC12 and COX14. Interacts with COA3 and MT-CO1/COX1.

The protein localises to the mitochondrion membrane. Functionally, participates in the translocation of transit peptide-containing proteins across the mitochondrial inner membrane. Also required for assembly of mitochondrial respiratory chain complex I and complex IV as component of the MITRAC (mitochondrial translation regulation assembly intermediate of cytochrome c oxidase complex) complex. Probably shuttles between the presequence translocase and respiratory-chain assembly intermediates in a process that promotes incorporation of early nuclear-encoded subunits into these complexes. In Mus musculus (Mouse), this protein is Mitochondrial import inner membrane translocase subunit Tim21 (Timm21).